The chain runs to 68 residues: Lipopolysaccharide export system ATP-binding protein LptB (68 aa).

The protein belongs to the ABC transporter superfamily. Outer membrane lipopolysaccharide export (TC 1.B.42) family. As to quaternary structure, component of the lipopolysaccharide transport and assembly complex. The LptBFG transporter is composed of two ATP-binding proteins (LptB) and two transmembrane proteins (LptF and LptG).

It is found in the cytoplasm. It localises to the cell inner membrane. Its function is as follows. Part of the ABC transporter complex LptBFG involved in the translocation of lipopolysaccharide (LPS) from the inner membrane to the outer membrane. Probably responsible for energy coupling to the transport system. This is Lipopolysaccharide export system ATP-binding protein LptB (lptB) from Klebsiella oxytoca.